Here is a 109-residue protein sequence, read N- to C-terminus: UPF0122 protein BH2485 (109 aa).

This sequence belongs to the UPF0122 family.

Functionally, might take part in the signal recognition particle (SRP) pathway. This is inferred from the conservation of its genetic proximity to ftsY/ffh. May be a regulatory protein. The chain is UPF0122 protein BH2485 from Halalkalibacterium halodurans (strain ATCC BAA-125 / DSM 18197 / FERM 7344 / JCM 9153 / C-125) (Bacillus halodurans).